The following is a 446-amino-acid chain: RUN domain-containing protein 3A (446 aa).

Residues 1 to 298 (MEASFVQTTM…LQLQLEEAAA (298 aa)) are interaction with RAP2A. The 138-residue stretch at 52 to 189 (DDSSEEFVNF…IDFSFCLKGE (138 aa)) folds into the RUN domain. Residue T215 is modified to Phosphothreonine. The interval 216–239 (DEEERHSAESSTSEDNSPEHPYLP) is disordered. Residue S232 is modified to Phosphoserine. Positions 267-322 (YLEELVRLRESQLKDLEAENRRLQLQLEEAAAQNQREKRELEGVILELQEQLTGLI) form a coiled coil. Residues 372 to 384 (PLSAEASLSSDSQ) are compositionally biased toward polar residues. Residues 372 to 404 (PLSAEASLSSDSQRLGEGTRDEEPWGPIGKDPT) form a disordered region. S416 and S419 each carry phosphoserine.

Belongs to the RUNDC3 family. In terms of assembly, interacts with the GTP-bound form of RAP2A.

May act as an effector of RAP2A in neuronal cells. This chain is RUN domain-containing protein 3A (RUNDC3A), found in Homo sapiens (Human).